The chain runs to 393 residues: Chalcone synthase 3 (393 aa).

The active site involves cysteine 166.

Belongs to the thiolase-like superfamily. Chalcone/stilbene synthases family.

The catalysed reaction is (E)-4-coumaroyl-CoA + 3 malonyl-CoA + 3 H(+) = 2',4,4',6'-tetrahydroxychalcone + 3 CO2 + 4 CoA. The protein operates within secondary metabolite biosynthesis; flavonoid biosynthesis. Functionally, the primary product of this enzyme is 4,2',4',6'-tetrahydroxychalcone (also termed naringenin-chalcone or chalcone) which can under specific conditions spontaneously isomerize into naringenin. This is Chalcone synthase 3 (CHS3) from Ruta graveolens (Common rue).